We begin with the raw amino-acid sequence, 143 residues long: Mediator of RNA polymerase II transcription subunit 9 (143 aa).

The stretch at 84–141 forms a coiled coil; it reads QDCNHKIFELQKRFESAREQIRQLPGIDYNKDEQLQRLELLRNQFKLKQQLIRKYKDT.

This sequence belongs to the Mediator complex subunit 9 family. Component of the Mediator complex.

The protein resides in the nucleus. Component of the Mediator complex, a coactivator involved in the regulated transcription of nearly all RNA polymerase II-dependent genes. Mediator functions as a bridge to convey information from gene-specific regulatory proteins to the basal RNA polymerase II transcription machinery. Mediator is recruited to promoters by direct interactions with regulatory proteins and serves as a scaffold for the assembly of a functional preinitiation complex with RNA polymerase II and the general transcription factors. The chain is Mediator of RNA polymerase II transcription subunit 9 (MED9) from Drosophila pseudoobscura pseudoobscura (Fruit fly).